The primary structure comprises 162 residues: MAPVAVGDTLPDGQLGWFDGEDKLQQVSVHGLAAGKKVVLFGVPGAFTPTCSNQHVPGFINQAEQLKAKGVDDILLVSVNDPFVMKAWAKSYPENKHVKFLADGLGTYTKALGLELDLSEKGLGIRSRRFALLADNLKVTVANIEEGGQFTISGAEEILKAL.

The region spanning 4 to 162 (VAVGDTLPDG…SGAEEILKAL (159 aa)) is the Thioredoxin domain. C51 (cysteine sulfenic acid (-SOH) intermediate) is an active-site residue.

This sequence belongs to the peroxiredoxin family. Prx5 subfamily. As to quaternary structure, monomer.

It localises to the cytoplasm. It catalyses the reaction [glutaredoxin]-dithiol + a hydroperoxide = [glutaredoxin]-disulfide + an alcohol + H2O. Reduces hydrogen peroxide and alkyl hydroperoxides with reducing equivalents provided through the thioredoxin or glutaredoxin system. May be involved in intracellular redox signaling. Functionally, thiol-specific peroxidase that catalyzes the reduction of hydrogen peroxide and organic hydroperoxides to water and alcohols, respectively. Plays a role in cell protection against oxidative stress by detoxifying peroxides. This chain is Peroxiredoxin-2C (PRXIIC), found in Oryza sativa subsp. japonica (Rice).